Reading from the N-terminus, the 475-residue chain is MAAGALRGLPVAGGGESSESEDDGWEIGYLDRTSQKLKGLLPIEEKKEKFKKAMTIGDVSLVQELLDSGISVDSTFQYGWTPLMYAASVANAELVRVLLDRGANASFEKDKQTILITACSAHGSEEQILKCVELLLSRNADPNVACRRLMTPIMYAARDGHTQVVALLVAHGAEVNTQDENGYTALTWAARQGHKNIVLKLLELGANKMLQTKDGKMPSEIAKRNKHHEIFNLLSFTLNPLEGKLQQLTKEDTICKILTTDSDREKDHIFSSYTAFGDLEVFLHGIGLEHMTDLLKERDITLRHLLTMREDEFTKNGITSKDQQKILAALKELQVEEIQFGELSEEIKLEISGDEFLNFLLKLNKQCGHLITAVQNIITELPVNSQKITLEWASPRNFTSVCEELVNNVEDLSEEVCKLKDLIQKLQNERENDPTHIQLREEVSTWNSRILKRTAITVCGFGFLLFICKLTFQRK.

The disordered stretch occupies residues 1 to 25 (MAAGALRGLPVAGGGESSESEDDGW). 3 positions are modified to phosphoserine: Ser-17, Ser-18, and Ser-20. ANK repeat units follow at residues 45–74 (EKKE…SVDS), 78–107 (YGWT…NASF), 110–144 (DKQT…DPNV), 148–177 (RLMT…EVNT), 181–210 (NGYT…NKML), and 214–243 (DGKM…PLEG). The 63-residue stretch at 272–334 (SYTAFGDLEV…KILAALKELQ (63 aa)) folds into the SAM domain.

In terms of assembly, interacts with DDX4, PIWIL1, RANBP9 and TDRD1.

It is found in the cytoplasm. In terms of biological role, plays a central role during spermatogenesis by repressing transposable elements and preventing their mobilization, which is essential for the germline integrity. Acts via the piRNA metabolic process, which mediates the repression of transposable elements during meiosis by forming complexes composed of piRNAs and Piwi proteins and governs the methylation and subsequent repression of transposons. Its association with pi-bodies suggests a participation in the primary piRNAs metabolic process. Required prior to the pachytene stage to facilitate the production of multiple types of piRNAs, including those associated with repeats involved in the regulation of retrotransposons. May act by mediating protein-protein interactions during germ cell maturation. This is Ankyrin repeat, SAM and basic leucine zipper domain-containing protein 1 (ASZ1) from Chlorocebus aethiops (Green monkey).